The following is a 315-amino-acid chain: MSKPRKQQHRKPKGRPISGWLILDKPLDFGSTEAVSKIKWLFNAQKAGHAGTLDPLASGMLPIALGDATKTVPYVMDGRKIYEFTVTWGEQRATDDLEGEVVESSDQRPEEQAIRDILPNYTGVIMQTPPQFSAIKIAGERAYDLARDGETVEIPAREVEIHRLTLLACPDADTAHFEVECGKGTYVRALARDMGRDLGCFGHISELRRTMVAPFGEDMMVPLETLTALEAIEDRDERLEALDAFLIDTAEALSSLPRLIINDDQAHRLKMGNPILLRGRDAPANHPEAYATAQGKLVAIGEIGEGEFRPKRVFG.

The active-site Nucleophile is Asp54.

This sequence belongs to the pseudouridine synthase TruB family. Type 1 subfamily.

It catalyses the reaction uridine(55) in tRNA = pseudouridine(55) in tRNA. Responsible for synthesis of pseudouridine from uracil-55 in the psi GC loop of transfer RNAs. The chain is tRNA pseudouridine synthase B from Agrobacterium fabrum (strain C58 / ATCC 33970) (Agrobacterium tumefaciens (strain C58)).